The following is a 548-amino-acid chain: Methyl-accepting chemotaxis protein HlyB (548 aa).

The Cytoplasmic segment spans residues 1–10; it reads MIINKFSLKW. Residues 11-31 traverse the membrane as a helical segment; sequence MLAIAVAIPAIALLFVAFTSL. Residues 32–199 lie on the Periplasmic side of the membrane; the sequence is NTMSVMQAQS…SFEAGRTKQM (168 aa). The helical transmembrane segment at 200–220 threads the bilayer; it reads VIIAAGLIISFITSLVIITNL. The 54-residue stretch at 218–271 folds into the HAMP domain; that stretch reads TNLRSRVAYLKDRMSSAAANLSLRTRLELDGNDELCDIGKSFNAFIDKVHHSIE. Residues 221 to 548 lie on the Cytoplasmic side of the membrane; that stretch reads RSRVAYLKDR…LDKLVGSFEL (328 aa). Residues 276–512 form the Methyl-accepting transducer domain; the sequence is NSKELATMAS…DINRNVEDIN (237 aa).

The protein belongs to the methyl-accepting chemotaxis (MCP) protein family.

The protein localises to the cell inner membrane. Functionally, chemotactic-signal transducers respond to changes in the concentration of attractants and repellents in the environment, transduce a signal from the outside to the inside of the cell, and facilitate sensory adaptation through the variation of the level of methylation. This Vibrio cholerae serotype O1 (strain ATCC 39315 / El Tor Inaba N16961) protein is Methyl-accepting chemotaxis protein HlyB (hlyB).